A 165-amino-acid polypeptide reads, in one-letter code: Pyruvoyl-dependent arginine decarboxylase 1 (165 aa).

Ser-45 is modified (pyruvic acid (Ser)).

Belongs to the PdaD family. The cofactor is pyruvate.

It catalyses the reaction L-arginine + H(+) = agmatine + CO2. This chain is Pyruvoyl-dependent arginine decarboxylase 1 (pdaD1), found in Methanosarcina mazei (strain ATCC BAA-159 / DSM 3647 / Goe1 / Go1 / JCM 11833 / OCM 88) (Methanosarcina frisia).